A 467-amino-acid chain; its full sequence is MGVSAVLLPLYLLAGVTSGLAVPASRNQSTCDTVDQGYQCFSETSHLWGQYAPFFSLANESAISPDVPAGCRVTFAQVLSRHGARYPTESKGKKYSALIEEIQQNVTTFDGKYAFLKTYNYSLGADDLTPFGEQELVNSGIKFYQRYESLTRNIIPFIRSSGSSRVIASGEKFIEGFQSTKLKDPRAQPGQSSPKIDVVISEASSSNNTLDPGTCTVFEDSELADTVEANFTATFAPSIRQRLENDLSGVTLTDTEVTYLMDMCSFDTISTSTVDTKLSPFCDLFTHDEWIHYDYLQSLKKYYGHGAGNPLGPTQGVGYANELIARLTHSPVHDDTSSNHTLDSNPATFPLNSTLYADFSHDNGIISILFALGLYNGTKPLSTTTVENITQTDGFSSAWTVPFASRLYVEMMQCQAEQEPLVRVLVNDRVVPLHGCPIDALGRCTRDSFVRGLSFARSGGDWAECSA.

The first 23 residues, 1-23 (MGVSAVLLPLYLLAGVTSGLAVP), serve as a signal peptide directing secretion. Asn27 carries N-linked (GlcNAc...) asparagine glycosylation. The cysteines at positions 31 and 40 are disulfide-linked. Positions 50 and 51 each coordinate 1D-myo-inositol hexakisphosphate. N-linked (GlcNAc...) asparagine glycosylation is present at Asn59. Intrachain disulfides connect Cys71–Cys414, Cys215–Cys465, Cys264–Cys282, and Cys436–Cys444. 1D-myo-inositol hexakisphosphate contacts are provided by Arg81, His82, Arg85, and Thr88. His82 acts as the Nucleophile in catalysis. N-linked (GlcNAc...) asparagine glycosylation is found at Asn105 and Asn120. 1D-myo-inositol hexakisphosphate is bound at residue Arg165. Asn207 and Asn230 each carry an N-linked (GlcNAc...) asparagine glycan. Lys301 serves as a coordination point for 1D-myo-inositol hexakisphosphate. 2 N-linked (GlcNAc...) asparagine glycosylation sites follow: Asn339 and Asn352. Residues His361 and Asp362 each contribute to the 1D-myo-inositol hexakisphosphate site. Residues Asn376 and Asn388 are each glycosylated (N-linked (GlcNAc...) asparagine).

Belongs to the histidine acid phosphatase family. In terms of assembly, monomer.

The protein localises to the secreted. The catalysed reaction is 1D-myo-inositol hexakisphosphate + H2O = 1D-myo-inositol 1,2,4,5,6-pentakisphosphate + phosphate. The enzyme catalyses 1D-myo-inositol 1,2,4,5,6-pentakisphosphate + H2O = 1D-myo-inositol 1,2,5,6-tetrakisphosphate + phosphate. It catalyses the reaction 1D-myo-inositol 1,2,5,6-tetrakisphosphate + H2O = 1D-myo-inositol 1,2,6-trisphosphate + phosphate. It carries out the reaction 1D-myo-inositol 1,2,6-trisphosphate + H2O = 1D-myo-inositol 1,2-bisphosphate + phosphate. The catalysed reaction is 1D-myo-inositol 1,2-bisphosphate + H2O = 1D-myo-inositol 2-phosphate + phosphate. In terms of biological role, catalyzes the phosphate monoester hydrolysis of phytic acid (myo-inositol hexakisphosphate), which results in the stepwise formation of myo-inositol pentakis-, tetrakis-, tris-, bis-, and monophosphates, as well as the liberation of inorganic phosphate. Myo-inositol 2-monophosphate is the end product. This chain is Phytase A (phyA), found in Aspergillus awamori (Black koji mold).